Here is a 318-residue protein sequence, read N- to C-terminus: Ubiquinol oxidase, mitochondrial (318 aa).

The transit peptide at 1–46 directs the protein to the mitochondrion; the sequence is MTVMRGLLNGGRYGNRYIWTAISLRHPEVMEGNGLESAVMQWRRML. A helical transmembrane segment spans residues 143–163; the sequence is AMMLETVAAVPGMVGGMLLHL. Fe cation is bound by residues E147, E186, and H189. The chain crosses the membrane as a helical span at residues 205–225; sequence LLVLAVQGVFFNSFFVLYVLS. Positions 237, 288, and 291 each coordinate Fe cation.

This sequence belongs to the alternative oxidase family. Homodimer; disulfide-linked. The cofactor is Fe cation.

The protein resides in the mitochondrion inner membrane. It catalyses the reaction 2 a ubiquinol + O2 = 2 a ubiquinone + 2 H2O. In terms of biological role, catalyzes the cyanide-resistant oxidation of ubiquinol and the reduction of molecular oxygen to water, but does not translocate protons and consequently is not linked to oxidative phosphorylation. May increase respiration when the cytochrome respiratory pathway is restricted, or in response to low temperatures. The polypeptide is Ubiquinol oxidase, mitochondrial (AOMI 1) (Mangifera indica (Mango)).